The following is a 72-amino-acid chain: Protein kish-A (72 aa).

A signal peptide spans Met1 to Ala26. Residues Leu27–Lys53 are Extracellular-facing. An N-linked (GlcNAc...) asparagine glycan is attached at Asn35. Residues Ser54–Met71 form a helical membrane-spanning segment. A topological domain (cytoplasmic) is located at residue Gln72.

This sequence belongs to the KISH family.

Its subcellular location is the golgi apparatus membrane. Involved in the early part of the secretory pathway. The chain is Protein kish-A (tmem167a) from Xenopus tropicalis (Western clawed frog).